The primary structure comprises 100 residues: Small ribosomal subunit protein uS14c (100 aa).

It belongs to the universal ribosomal protein uS14 family. Part of the 30S ribosomal subunit.

The protein resides in the plastid. The protein localises to the chloroplast. Functionally, binds 16S rRNA, required for the assembly of 30S particles. The chain is Small ribosomal subunit protein uS14c from Liriodendron tulipifera (Tuliptree).